The primary structure comprises 537 residues: Glucan 1,6-alpha-glucosidase (537 aa).

Asp194 serves as the catalytic Nucleophile. Catalysis depends on Glu236, which acts as the Proton donor.

The protein belongs to the glycosyl hydrolase 13 family.

It localises to the cytoplasm. The catalysed reaction is Hydrolysis of (1-&gt;6)-alpha-D-glucosidic linkages in (1-&gt;6)-alpha-D-glucans and derived oligosaccharides.. The physiological substrates may be short isomaltosaccharides. The chain is Glucan 1,6-alpha-glucosidase (dexB) from Streptococcus dysgalactiae subsp. equisimilis (Streptococcus equisimilis).